The sequence spans 798 residues: Disintegrin and metalloproteinase domain-containing protein B (798 aa).

The first 23 residues, 1 to 23, serve as a signal peptide directing secretion; that stretch reads MKAFSCLLAVIATAASLFQHVDA. At 24-706 the chain is on the extracellular side; sequence SHARDKLNNI…VSDWVSRHKP (683 aa). N-linked (GlcNAc...) asparagine glycosylation is found at asparagine 32, asparagine 226, asparagine 227, asparagine 313, and asparagine 407. In terms of domain architecture, Peptidase M12B spans 271–510; that stretch reads KVALIGVVAD…RTILTNCLTT (240 aa). Intrachain disulfides connect cysteine 395–cysteine 495, cysteine 448–cysteine 459, and cysteine 580–cysteine 600. Histidine 431 is a binding site for Zn(2+). Glutamate 432 is an active-site residue. Zn(2+)-binding residues include histidine 435 and histidine 441. A Disintegrin domain is found at 519-608; that stretch reads GQQCGNGIVE…DCPHDIHSKD (90 aa). The chain crosses the membrane as a helical span at residues 707–727; sequence IVIGVAVGAGCLLLLAIASCI. The Cytoplasmic portion of the chain corresponds to 728 to 798; it reads CGRSRRQRPR…PGHMPPTRYA (71 aa). The interval 734-798 is disordered; it reads QRPRNRKMPP…PGHMPPTRYA (65 aa). Pro residues predominate over residues 775-792; the sequence is NNIPPPINAPPPAYPGHM.

Zn(2+) serves as cofactor.

It is found in the membrane. In terms of biological role, probable zinc protease. The protein is Disintegrin and metalloproteinase domain-containing protein B (ADM-B) of Trichophyton verrucosum (strain HKI 0517).